A 305-amino-acid chain; its full sequence is tRNA dimethylallyltransferase (305 aa).

Position 9 to 16 (9 to 16 (GPTAVGKT)) interacts with ATP. 11–16 (TAVGKT) serves as a coordination point for substrate. Residues 34 to 37 (DSRQ) are interaction with substrate tRNA.

This sequence belongs to the IPP transferase family. As to quaternary structure, monomer. Mg(2+) serves as cofactor.

The catalysed reaction is adenosine(37) in tRNA + dimethylallyl diphosphate = N(6)-dimethylallyladenosine(37) in tRNA + diphosphate. Functionally, catalyzes the transfer of a dimethylallyl group onto the adenine at position 37 in tRNAs that read codons beginning with uridine, leading to the formation of N6-(dimethylallyl)adenosine (i(6)A). This chain is tRNA dimethylallyltransferase, found in Roseiflexus sp. (strain RS-1).